We begin with the raw amino-acid sequence, 544 residues long: MNSESVDSDVAASTSNKGNELCSSSTDITSLSVSSPNESVIHSSHSASEADEYVCKLSYEGNRKKRIYNGSAEAGKEKKLQKQRAQEERIRQKEAERLKREKERQQREQEKKLREQEKIAAKKMKELEKLEKERIRLQEQQRRKEERDQKLREKEEAQRLRQEQILNKERQQLKLNNFFTKGVEKRIAPNENFVADKTDELNEFEKEFRPFFIKHQMSLSKYPSPNESDSFLDEVLSTSKSYPLKLNDIFTPSDAVSSANSLGVSNRNSENEVRQLMSAYQDPSVSKPQEILSCLSQIPIKFIFFYQDVRPPYFGSYTKTHSHGSNVLLNPWLEDEDIDYTYDSEAEWVADEEDDGEDLESEDEEVDNSDDIVEDGDNAFVDDEDDDKDSVNASNTHRSSGPLEVIVEGPVWDSKFLPDFNCLSLIEPISSFSASTYLQIDPKEDLWASQDTAPASSGMTIGPTSSLSDDLQVRFPSEDIPKFIEYVRNSHDNKVFLIENLRHMFPYVTKNIISETLGKVAVRKGKSVSDGWIIKENFASLLSS.

Polar residues predominate over residues 1-22 (MNSESVDSDVAASTSNKGNELC). Disordered stretches follow at residues 1-52 (MNSE…EADE), 67-117 (IYNG…REQE), and 138-160 (QEQQ…AQRL). Low complexity predominate over residues 23 to 35 (SSSTDITSLSVSS). Residues 36-47 (PNESVIHSSHSA) are compositionally biased toward polar residues. The segment at 56–170 (KLSYEGNRKK…RQEQILNKER (115 aa)) is interaction with DNA and pcn1/PCNA. Over residues 74–117 (AGKEKKLQKQRAQEERIRQKEAERLKREKERQQREQEKKLREQE) the composition is skewed to basic and acidic residues. Residues 76-176 (KEKKLQKQRA…NKERQQLKLN (101 aa)) adopt a coiled-coil conformation. The PCNA-interaction protein (PIP box) signature appears at 172–179 (QLKLNNFF). An interaction with histones H3/H4 region spans residues 325–396 (SNVLLNPWLE…DKDSVNASNT (72 aa)). Residues 351–388 (DEEDDGEDLESEDEEVDNSDDIVEDGDNAFVDDEDDDK) are compositionally biased toward acidic residues. Residues 351-400 (DEEDDGEDLESEDEEVDNSDDIVEDGDNAFVDDEDDDKDSVNASNTHRSS) are disordered.

It belongs to the RLF2 family. In terms of assembly, component of chromatin assembly factor 1 (CAF-1), composed of pcf1, pcf2 and pcf3. Interacts (via PIP motif) with pcn1/PCNA; the interaction is direct and occurs during S-phase. Interacts with swi6 at the G1/S-phase transition and early S-phase, but not in the G2 phase. The CAF-1 complex interacts with histone H3/H4 dimers.

The protein resides in the nucleus. Functionally, acts as a component of the histone chaperone complex chromatin assembly factor 1 (CAF-1), which assembles histone octamers onto DNA during replication and repair. CAF-1 performs the first step of the nucleosome assembly process, bringing newly synthesized histones H3 and H4 to replicating DNA; histones H2A/H2B can bind to this chromatin precursor subsequent to DNA replication to complete the histone octamer. Plays a role in the maintenance of heterochromatin. The chain is Chromatin assembly factor 1 subunit A from Schizosaccharomyces pombe (strain 972 / ATCC 24843) (Fission yeast).